A 239-amino-acid chain; its full sequence is Purine nucleoside phosphorylase DeoD-type (239 aa).

Histidine 5 contributes to the a purine D-ribonucleoside binding site. Residues glycine 21, arginine 25, arginine 44, and 88-91 (RVGS) contribute to the phosphate site. Residues 180-182 (EME) and 204-205 (SD) contribute to the a purine D-ribonucleoside site. Aspartate 205 functions as the Proton donor in the catalytic mechanism.

Belongs to the PNP/UDP phosphorylase family. As to quaternary structure, homohexamer; trimer of homodimers.

The enzyme catalyses a purine D-ribonucleoside + phosphate = a purine nucleobase + alpha-D-ribose 1-phosphate. The catalysed reaction is a purine 2'-deoxy-D-ribonucleoside + phosphate = a purine nucleobase + 2-deoxy-alpha-D-ribose 1-phosphate. In terms of biological role, catalyzes the reversible phosphorolytic breakdown of the N-glycosidic bond in the beta-(deoxy)ribonucleoside molecules, with the formation of the corresponding free purine bases and pentose-1-phosphate. The polypeptide is Purine nucleoside phosphorylase DeoD-type (Yersinia pseudotuberculosis serotype O:1b (strain IP 31758)).